Here is a 421-residue protein sequence, read N- to C-terminus: Histidine--tRNA ligase (421 aa).

The protein belongs to the class-II aminoacyl-tRNA synthetase family. Homodimer.

It is found in the cytoplasm. It catalyses the reaction tRNA(His) + L-histidine + ATP = L-histidyl-tRNA(His) + AMP + diphosphate + H(+). The sequence is that of Histidine--tRNA ligase from Caldicellulosiruptor bescii (strain ATCC BAA-1888 / DSM 6725 / KCTC 15123 / Z-1320) (Anaerocellum thermophilum).